The chain runs to 188 residues: NADH-quinone oxidoreductase subunit I (188 aa).

2 consecutive 4Fe-4S ferredoxin-type domains span residues L44–A74 and Q90–E119. [4Fe-4S] cluster-binding residues include C54, C57, C60, C64, C99, C102, C105, and C109. Residues T167–P188 form a disordered region. Residues D176–P188 show a composition bias toward acidic residues.

This sequence belongs to the complex I 23 kDa subunit family. NDH-1 is composed of 14 different subunits. Subunits NuoA, H, J, K, L, M, N constitute the membrane sector of the complex. [4Fe-4S] cluster serves as cofactor.

It is found in the cell membrane. The catalysed reaction is a quinone + NADH + 5 H(+)(in) = a quinol + NAD(+) + 4 H(+)(out). Its function is as follows. NDH-1 shuttles electrons from NADH, via FMN and iron-sulfur (Fe-S) centers, to quinones in the respiratory chain. The immediate electron acceptor for the enzyme in this species is believed to be ubiquinone. Couples the redox reaction to proton translocation (for every two electrons transferred, four hydrogen ions are translocated across the cytoplasmic membrane), and thus conserves the redox energy in a proton gradient. In Rhodococcus jostii (strain RHA1), this protein is NADH-quinone oxidoreductase subunit I.